Reading from the N-terminus, the 266-residue chain is Thymidylate synthase (266 aa).

Arg24 serves as a coordination point for dUMP. Position 54 (His54) interacts with (6R)-5,10-methylene-5,6,7,8-tetrahydrofolate. 129-130 (RR) contacts dUMP. Catalysis depends on Cys149, which acts as the Nucleophile. DUMP contacts are provided by residues 169-172 (RSAD), Asn180, and 210-212 (HIY). Asp172 serves as a coordination point for (6R)-5,10-methylene-5,6,7,8-tetrahydrofolate. Ala265 serves as a coordination point for (6R)-5,10-methylene-5,6,7,8-tetrahydrofolate.

This sequence belongs to the thymidylate synthase family. Bacterial-type ThyA subfamily. In terms of assembly, homodimer.

The protein resides in the cytoplasm. The catalysed reaction is dUMP + (6R)-5,10-methylene-5,6,7,8-tetrahydrofolate = 7,8-dihydrofolate + dTMP. It functions in the pathway pyrimidine metabolism; dTTP biosynthesis. Catalyzes the reductive methylation of 2'-deoxyuridine-5'-monophosphate (dUMP) to 2'-deoxythymidine-5'-monophosphate (dTMP) while utilizing 5,10-methylenetetrahydrofolate (mTHF) as the methyl donor and reductant in the reaction, yielding dihydrofolate (DHF) as a by-product. This enzymatic reaction provides an intracellular de novo source of dTMP, an essential precursor for DNA biosynthesis. The sequence is that of Thymidylate synthase from Mycobacterium leprae (strain TN).